Here is a 186-residue protein sequence, read N- to C-terminus: Large ribosomal subunit protein uL22 (186 aa).

It belongs to the universal ribosomal protein uL22 family. Component of the large ribosomal subunit (LSU). Mature N.crassa ribosomes consist of a small (40S) and a large (60S) subunit. The 40S small subunit contains 1 molecule of ribosomal RNA (18S rRNA) and at least 32 different proteins. The large 60S subunit contains 3 rRNA molecules (26S, 5.8S and 5S rRNA) and at least 42 different proteins.

It is found in the cytoplasm. Its function is as follows. Component of the ribosome, a large ribonucleoprotein complex responsible for the synthesis of proteins in the cell. The small ribosomal subunit (SSU) binds messenger RNAs (mRNAs) and translates the encoded message by selecting cognate aminoacyl-transfer RNA (tRNA) molecules. The large subunit (LSU) contains the ribosomal catalytic site termed the peptidyl transferase center (PTC), which catalyzes the formation of peptide bonds, thereby polymerizing the amino acids delivered by tRNAs into a polypeptide chain. The nascent polypeptides leave the ribosome through a tunnel in the LSU and interact with protein factors that function in enzymatic processing, targeting, and the membrane insertion of nascent chains at the exit of the ribosomal tunnel. This is Large ribosomal subunit protein uL22 (rpl-17) from Neurospora crassa (strain ATCC 24698 / 74-OR23-1A / CBS 708.71 / DSM 1257 / FGSC 987).